The primary structure comprises 577 residues: DNA-directed RNA polymerase subunit alpha (577 aa).

Residues 1-461 are alpha N-terminal domain (alpha-NTD); it reads MIKIIIKETF…QLFLPLQQIR (461 aa). The tract at residues 510-577 is alpha C-terminal domain (alpha-CTD); the sequence is FDHRLLELDI…ALQLMKLTLK (68 aa).

This sequence belongs to the RNA polymerase alpha chain family. In terms of assembly, in plastids the minimal PEP RNA polymerase catalytic core is composed of four subunits: alpha, beta, beta', and beta''. When a (nuclear-encoded) sigma factor is associated with the core the holoenzyme is formed, which can initiate transcription.

Its subcellular location is the plastid. It is found in the chloroplast. It carries out the reaction RNA(n) + a ribonucleoside 5'-triphosphate = RNA(n+1) + diphosphate. Functionally, DNA-dependent RNA polymerase catalyzes the transcription of DNA into RNA using the four ribonucleoside triphosphates as substrates. This is DNA-directed RNA polymerase subunit alpha from Tupiella akineta (Green alga).